The sequence spans 275 residues: Large ribosomal subunit protein uL2 (275 aa).

The segment at 222–257 (GTAMNAVDHPHGGGRGRSKGNNQPRSPWNQPAKGFK) is disordered. Positions 240–250 (KGNNQPRSPWN) are enriched in polar residues.

The protein belongs to the universal ribosomal protein uL2 family. In terms of assembly, part of the 50S ribosomal subunit. Forms a bridge to the 30S subunit in the 70S ribosome.

One of the primary rRNA binding proteins. Required for association of the 30S and 50S subunits to form the 70S ribosome, for tRNA binding and peptide bond formation. It has been suggested to have peptidyltransferase activity; this is somewhat controversial. Makes several contacts with the 16S rRNA in the 70S ribosome. The sequence is that of Large ribosomal subunit protein uL2 from Endomicrobium trichonymphae.